Here is an 83-residue protein sequence, read N- to C-terminus: Translation initiation factor IF-1 (83 aa).

Residues 1 to 72 (MAKEESIEMQ…TRGRIVYREA (72 aa)) enclose the S1-like domain.

The protein belongs to the IF-1 family. In terms of assembly, component of the 30S ribosomal translation pre-initiation complex which assembles on the 30S ribosome in the order IF-2 and IF-3, IF-1 and N-formylmethionyl-tRNA(fMet); mRNA recruitment can occur at any time during PIC assembly.

The protein localises to the cytoplasm. Functionally, one of the essential components for the initiation of protein synthesis. Stabilizes the binding of IF-2 and IF-3 on the 30S subunit to which N-formylmethionyl-tRNA(fMet) subsequently binds. Helps modulate mRNA selection, yielding the 30S pre-initiation complex (PIC). Upon addition of the 50S ribosomal subunit IF-1, IF-2 and IF-3 are released leaving the mature 70S translation initiation complex. This chain is Translation initiation factor IF-1, found in Coxiella burnetii (strain Dugway 5J108-111).